A 676-amino-acid chain; its full sequence is DNA ligase (676 aa).

NAD(+) contacts are provided by residues 41-45 (DLTYD), 90-91 (SL), and Glu123. The active-site N6-AMP-lysine intermediate is the Lys125. Arg146, Glu180, Lys293, and Lys317 together coordinate NAD(+). Positions 408, 411, 424, and 429 each coordinate Zn(2+).

It belongs to the NAD-dependent DNA ligase family. LigA subfamily. Mg(2+) is required as a cofactor. It depends on Mn(2+) as a cofactor.

It catalyses the reaction NAD(+) + (deoxyribonucleotide)n-3'-hydroxyl + 5'-phospho-(deoxyribonucleotide)m = (deoxyribonucleotide)n+m + AMP + beta-nicotinamide D-nucleotide.. DNA ligase that catalyzes the formation of phosphodiester linkages between 5'-phosphoryl and 3'-hydroxyl groups in double-stranded DNA using NAD as a coenzyme and as the energy source for the reaction. It is essential for DNA replication and repair of damaged DNA. This Borrelia turicatae (strain 91E135) protein is DNA ligase.